Reading from the N-terminus, the 50-residue chain is Protein hunchback (50 aa).

3 consecutive C2H2-type zinc fingers follow at residues 1–5 (HLRNH), 11–33 (FKCG…MKSH), and 39–50 (YRCANCCYATKY).

The protein belongs to the hunchback C2H2-type zinc-finger protein family.

It localises to the nucleus. In terms of biological role, gap class segmentation protein that controls development of head structures. This Pholcus phalangioides (Longbodied cellar spider) protein is Protein hunchback (hb).